The sequence spans 456 residues: Enolase (456 aa).

Residue Gln177 participates in (2R)-2-phosphoglycerate binding. The active-site Proton donor is the Glu219. Mg(2+)-binding residues include Asp256, Glu310, and Asp337. The (2R)-2-phosphoglycerate site is built by Lys362, Arg391, Ser392, and Lys413. Lys362 (proton acceptor) is an active-site residue.

The protein belongs to the enolase family. In terms of assembly, homodimer. The cofactor is Mg(2+).

It localises to the cytoplasm. Its subcellular location is the secreted. The protein resides in the cell surface. It carries out the reaction (2R)-2-phosphoglycerate = phosphoenolpyruvate + H2O. The protein operates within carbohydrate degradation; glycolysis; pyruvate from D-glyceraldehyde 3-phosphate: step 4/5. Functionally, catalyzes the reversible conversion of 2-phosphoglycerate (2-PG) into phosphoenolpyruvate (PEP). It is essential for the degradation of carbohydrates via glycolysis. Its function is as follows. 'Moonlights' as a plasminogen receptor. Binds plasminogen, but no fibronectin binding was observed. Plasminogen binding increases bacterial adherence to host cells; plasmin activity leads to degradation of host extracellular matrix proteins, facilitating bacterial dissemination and disease spread. The protein is Enolase of Mycoplasma pneumoniae (strain ATCC 29342 / M129 / Subtype 1) (Mycoplasmoides pneumoniae).